Reading from the N-terminus, the 167-residue chain is Neutrophilic granule protein (167 aa).

Residues 1 to 21 (MAGLWKTFVLVVALAVVSCEA) form the signal peptide. The tract at residues 122–141 (EDTQETSFNDKQDVSEKEKF) is disordered.

This sequence belongs to the cathelicidin family. Monomer. Homodimer; disulfide-linked. In terms of tissue distribution, expressed in myeloid bone marrow cells. Expressed in neutrophilic precursors (at protein level). Expressed in myeloid bone marrow cells.

It is found in the secreted. The protein resides in the cytoplasmic granule. Its function is as follows. Acts as an inhibitor of cathepsin B (CTSB) activity. Plays a role as a negative regulator of tumor vascular development, cell invasion and metastasis. The polypeptide is Neutrophilic granule protein (Mus musculus (Mouse)).